The chain runs to 237 residues: Lipid A 1-diphosphate synthase (237 aa).

Residues 1–5 (MIKNL) are Cytoplasmic-facing. The helical transmembrane segment at 6-26 (PQIVLLNIVGLALFLSWYIPV) threads the bilayer. Over 27-62 (NHGFWLPIDADIFYFFNQKLVESKAFLWLVALTNNR) the chain is Periplasmic. The chain crosses the membrane as a helical span at residues 63–83 (AFDGCSLLAMGMLMLSFWLKE). The Cytoplasmic segment spans residues 84–90 (NAPGRRR). A helical membrane pass occupies residues 91–111 (IVIIGLVMLLTAVVLNQLGQA). Topologically, residues 112-145 (LIPVKRASPTLTFTDINRVSELLSVPTKDASRDS) are periplasmic. A topological domain (cytoplasmic) is located at residue Lys-167. A helical transmembrane segment spans residues 168–188 (VAGLIALIIFVVFAFPRVMIG). Residues 189 to 194 (AHWFTD) lie on the Periplasmic side of the membrane. Residues 195-215 (IIVGSMTVILIGLPWVLLTPL) form a helical membrane-spanning segment. The Cytoplasmic portion of the chain corresponds to 216–237 (SDRLITFFDKSLPGKNKHFQNK).

It belongs to the LpxT phosphotransferase family.

The protein resides in the cell inner membrane. The catalysed reaction is di-trans,octa-cis-undecaprenyl diphosphate + alpha-Kdo-(2-&gt;4)-alpha-Kdo-(2-&gt;6)-lipid A (E. coli) = (Kdo)2-lipid A 1-diphosphate + di-trans,octa-cis-undecaprenyl phosphate. Its pathway is bacterial outer membrane biogenesis; lipopolysaccharide biosynthesis. Its activity is regulated as follows. Inhibited by BasR. This regulation does not occur at the level of transcription, but rather following the assembly of LpxT into the inner membrane. Involved in the modification of the lipid A domain of lipopolysaccharides (LPS). Transfers a phosphate group from undecaprenyl pyrophosphate (C55-PP) to lipid A to form lipid A 1-diphosphate. Contributes to the recycling of undecaprenyl phosphate (C55-P). In vitro, has low undecaprenyl-diphosphate phosphatase activity. The sequence is that of Lipid A 1-diphosphate synthase from Escherichia coli (strain K12).